The primary structure comprises 691 residues: Tumor necrosis factor alpha-induced protein 2 (691 aa).

The disordered stretch occupies residues 9 to 111; that stretch reads QGFPGQQSVP…KPRPELDGPL (103 aa). Positions 12-31 are enriched in polar residues; it reads PGQQSVPGTLNFAVSPQKPR. Residues 33 to 45 show a composition bias toward low complexity; the sequence is TSEAESETSMSEA. Residues 91–107 are compositionally biased toward basic and acidic residues; that stretch reads QPRLSDLEVQPKPRPEL.

It belongs to the SEC6 family.

Its function is as follows. May play a role as a mediator of inflammation and angiogenesis. This is Tumor necrosis factor alpha-induced protein 2 (Tnfaip2) from Mus musculus (Mouse).